We begin with the raw amino-acid sequence, 554 residues long: Raftlin (554 aa).

A lipid anchor (N-myristoyl glycine) is attached at glycine 2. Residue cysteine 3 is the site of S-palmitoyl cysteine attachment. Phosphoserine is present on residues serine 183 and serine 199. 3 disordered regions span residues 192–249 (CTLG…NEAG), 441–488 (KKRE…DQFS), and 504–554 (GRAS…TEAN). Basic and acidic residues-rich tracts occupy residues 198 to 209 (SSLENDTPKAAE) and 475 to 487 (QAEE…EDQF). Residues serine 507 and serine 530 each carry the phosphoserine modification. The span at 526–542 (HNRDSVALRHSNPRAEA) shows a compositional bias: basic and acidic residues.

This sequence belongs to the raftlin family. In terms of assembly, interacts with TLR4; the interaction occurs in response to lipopolysaccharide stimulation. Interacts with CLTC; the interaction occurs in response to pathogens. Interacts with AP2A1 and AP2B1. In terms of tissue distribution, expressed in T-cells, B-cells, thymus and spleen (at protein level). Expressed in dendritic cells, macrophages, heart, lung and small intestine.

The protein localises to the cell membrane. It localises to the cytoplasm. Its subcellular location is the membrane raft. It is found in the endosome. The protein resides in the early endosome. In terms of biological role, involved in protein trafficking via association with clathrin and AP2 complex. Upon bacterial lipopolysaccharide stimulation, mediates internalization of TLR4 to endosomes in dendritic cells and macrophages, and internalization of poly(I:C) to TLR3-positive endosomes in myeloid dendritic cells and epithelial cells; resulting in activation of TICAM1-mediated signaling and subsequent IFNB1 production. Involved in T-cell antigen receptor-mediated signaling by regulating tyrosine kinase LCK localization, T-cell dependent antibody production and cytokine secretion. May regulate B-cell antigen receptor-mediated signaling. May play a pivotal role in the formation and/or maintenance of lipid rafts. This chain is Raftlin (Rftn1), found in Mus musculus (Mouse).